Consider the following 436-residue polypeptide: GTPase Der (436 aa).

2 EngA-type G domains span residues 4-167 and 176-351; these read PVVA…KNIP and VQFC…ENHS. GTP contacts are provided by residues 10–17, 57–61, 119–122, 182–189, 229–233, and 294–297; these read GRPNVGKS, DTGGI, NKLD, DTAGM, and NKWD. The KH-like domain occupies 352-436; the sequence is LRVQTNVLND…PIKIFARARK (85 aa).

It belongs to the TRAFAC class TrmE-Era-EngA-EngB-Septin-like GTPase superfamily. EngA (Der) GTPase family. Associates with the 50S ribosomal subunit.

In terms of biological role, GTPase that plays an essential role in the late steps of ribosome biogenesis. This chain is GTPase Der, found in Bacillus velezensis (strain DSM 23117 / BGSC 10A6 / LMG 26770 / FZB42) (Bacillus amyloliquefaciens subsp. plantarum).